The following is an 800-amino-acid chain: Cell division cycle 5-like protein (800 aa).

HTH myb-type domains are found at residues 1–56 (MRNV…DPSI) and 57–106 (KKTE…DEVQ). 2 DNA-binding regions (H-T-H motif) span residues 29–52 (WARISSLLTRKSPAQCKARWHEWL) and 80–102 (WKTIAPLVGRTASQCLERYNRLL). Disordered stretches follow at residues 109-186 (QDNE…KRKF), 334-378 (YEKL…NIRT), 399-445 (QTPL…KQSL), and 571-610 (NKTFPNDSITPSSTFDDDDDDDNHHHHHDDIDNNSINDND). Residues 113-122 (NGGGSGGGGT) are compositionally biased toward gly residues. Residues 133–142 (NDPRRLRMGD) are compositionally biased toward basic and acidic residues. A compositionally biased stretch (gly residues) spans 340 to 351 (SGSGGGSGGVGV). The span at 361–376 (TASISSTAANNNTNNI) shows a compositional bias: low complexity. Polar residues-rich tracts occupy residues 409-445 (NVSQTPLPKSVNNSTPFRTPNPLANQTPTQHNKKQSL) and 573-584 (TFPNDSITPSST). Over residues 592 to 601 (DNHHHHHDDI) the composition is skewed to basic and acidic residues. Coiled-coil stretches lie at residues 621–700 (NTEL…KIKN) and 748–800 (VALK…LSIF).

It belongs to the CEF1 family. Component of the precatalytic, catalytic and postcatalytic spliceosome complexes.

The protein resides in the nucleus. Its subcellular location is the cytoplasm. In terms of biological role, DNA-binding protein involved in cell cycle control. May act as a transcription activator. Plays a role in pre-mRNA splicing as core component of precatalytic, catalytic and postcatalytic spliceosomal complexes. May also play a role in the response to DNA damage (DDR). The chain is Cell division cycle 5-like protein (cdc5l) from Dictyostelium discoideum (Social amoeba).